A 651-amino-acid chain; its full sequence is E3 SUMO-protein ligase PIAS1 (651 aa).

At A2 the chain carries N-acetylalanine. The interval 2–200 is required for interaction with MSX1; sequence ADSAELKQMV…KCDFTVQVQL (199 aa). Residues 11 to 45 form the SAP domain; it reads VMSLRVSELQVLLGYAGRNKHGRKHELLTKALHLL. The LXXLL motif motif lies at 19 to 23; sequence LQVLL. Residues K40 and K46 each participate in a glycyl lysine isopeptide (Lys-Gly) (interchain with G-Cter in SUMO2) cross-link. Positions 56–64 match the Nuclear localization signal motif; sequence KIKELYRRR. Residues 124–288 enclose the PINIT domain; the sequence is HLTSALHPVH…SMAVYLVKQL (165 aa). Glycyl lysine isopeptide (Lys-Gly) (interchain with G-Cter in SUMO2) cross-links involve residues K137 and K238. An SP-RING-type zinc finger spans residues 320–405; it reads PDSEIATTSL…LKYCTDCDEI (86 aa). Residues C351, H353, C374, and C377 each coordinate Zn(2+). Residues 368–380 carry the Nuclear localization signal motif; sequence KKPTWVCPVCDKK. K453 participates in a covalent cross-link: Glycyl lysine isopeptide (Lys-Gly) (interchain with G-Cter in SUMO2). The segment at 462–473 is SUMO1-binding; the sequence is LTIDSSSDEEEE. A disordered region spans residues 465–511; it reads DSSSDEEEEEPSAKRTCPSLSPTSPLNNKGILSLPHQASPVSRTPSL. Phosphoserine occurs at positions 467, 468, 483, and 485. Over residues 482–491 the composition is skewed to polar residues; it reads PSLSPTSPLN. At T487 the chain carries Phosphothreonine. Position 488 is a phosphoserine (S488). A Glycyl lysine isopeptide (Lys-Gly) (interchain with G-Cter in SUMO2) cross-link involves residue K493. Phosphoserine is present on residues S503, S510, and S522. 2 tandem repeats follow at residues 520 to 523 and 557 to 560. The interval 520–615 is 4 X 4 AA repeats of N-T-S-L; it reads NTSLIQDYRH…GSSSGSNSSL (96 aa). The 3; approximate repeat unit spans residues 598–601; the sequence is STSL. Positions 599–621 are enriched in low complexity; that stretch reads TSLPTTNGSSSGSNSSLVSSNSL. Residues 599 to 632 are disordered; sequence TSLPTTNGSSSGSNSSLVSSNSLRESHSHTVTNR. Residues 612 to 615 form a 4; approximate repeat; it reads NSSL.

Belongs to the PIAS family. As to quaternary structure, interacts with NCOA2 and AR. Interacts with NR2C1; the interaction promotes its sumoylation. Interacts with DDX21, CSRP2, AXIN1, JUN, UBE2I, SUMO1, SATB2, PLAG1, TP53 and STAT1 (dimer), following IFNA1-stimulation. Interacts with SP3 (preferentially when SUMO-modified). Interacts with KLF8; the interaction results in SUMO ligation and repression of KLF8 transcriptional activity and of its cell cycle progression into G(1) phase. Interacts with CHUK/IKKA; this interaction induces PIAS1 phosphorylation. Interacts with PTK2/FAK1; the interaction promotes its sumoylation. Interacts with DDX5. Interacts with PML. Interacts with MTA1. Interacts with SUMO1P1/SUMO5. Interacts with PRDM1/Blimp-1. Interacts (via N-terminus) with MSX1 (via C-terminus); the interaction is required for the localization of both proteins to the nuclear periphery and specific binding of MSX1 to the core enhancer region in target gene promoters. (Microbial infection) Interacts with ebolavirus VP35; this interaction mediates the sumoylation of IRF7 and contributes to the viral inhibition of IFN-type I production. Post-translationally, sumoylated. In terms of tissue distribution, expressed in numerous tissues with highest level in testis.

It localises to the nucleus. The protein resides in the nucleus speckle. Its subcellular location is the PML body. It is found in the cytoplasm. The protein localises to the cytoskeleton. The protein operates within protein modification; protein sumoylation. Functionally, functions as an E3-type small ubiquitin-like modifier (SUMO) ligase, stabilizing the interaction between UBE2I and the substrate, and as a SUMO-tethering factor. Catalyzes sumoylation of various proteins, such as CEBPB, MRE11, MTA1, PTK2 and PML. Plays a crucial role as a transcriptional coregulation in various cellular pathways, including the STAT pathway, the p53 pathway and the steroid hormone signaling pathway. In vitro, binds A/T-rich DNA. The effects of this transcriptional coregulation, transactivation or silencing, may vary depending upon the biological context. Mediates sumoylation of MRE11, stabilizing MRE11 on chromatin during end resection. Sumoylates PML (at 'Lys-65' and 'Lys-160') and PML-RAR and promotes their ubiquitin-mediated degradation. PIAS1-mediated sumoylation of PML promotes its interaction with CSNK2A1/CK2 which in turn promotes PML phosphorylation and degradation. Enhances the sumoylation of MTA1 and may participate in its paralog-selective sumoylation. Plays a dynamic role in adipogenesis by promoting the SUMOylation and degradation of CEBPB. Mediates the nuclear mobility and localization of MSX1 to the nuclear periphery, whereby MSX1 is brought into the proximity of target myoblast differentiation factor genes. Also required for the binding of MSX1 to the core enhancer region in target gene promoter regions, independent of its sumoylation activity. Capable of binding to the core enhancer region TAAT box in the MYOD1 gene promoter. In terms of biological role, (Microbial infection) Restricts Epstein-Barr virus (EBV) lytic replication by acting as an inhibitor for transcription factors involved in lytic gene expression. The virus can use apoptotic caspases to antagonize PIAS1-mediated restriction and express its lytic genes. This is E3 SUMO-protein ligase PIAS1 (PIAS1) from Homo sapiens (Human).